The chain runs to 945 residues: Cysteine-rich, acidic integral membrane protein (945 aa).

Positions 1-20 (MGNEAGPIFEESNAEVGTPP) are disordered. Residues 1-23 (MGNEAGPIFEESNAEVGTPPADA) form the signal peptide. Residues 24 to 882 (VHDDFFFDYK…GKGSSVSAGL (859 aa)) are Extracellular-facing. N34 and N43 each carry an N-linked (GlcNAc...) asparagine glycan. A run of 66 repeats spans residues 40–51 (DDCNITGDCNET), 52–63 (DDCDITGDCNET), 64–75 (DDCNITGDCNET), 76–87 (DDCNITGDCNET), 88–99 (DDCNITGDCNET), 100–111 (DDCNITGDCNET), 112–123 (DDCDITGDCNET), 124–135 (DDCNITGDCNET), 136–147 (DDCNITGDCNET), 148–159 (DDCNITGDCNET), 160–171 (DDCDITGDCNET), 172–183 (DDCNITGDCNET), 184–195 (DDCDITGDCNET), 196–207 (DDCNITGDCNET), 208–219 (DDCNITGDCNET), 220–231 (DDCNITGDCNET), 232–243 (DDCNITGDCNET), 244–255 (DDCNITGDCNET), 256–267 (DDCNITGDCNET), 268–279 (DDCDITGDCNET), 280–291 (DDCNITGDCNET), 292–303 (DDCNITGDCNET), 304–315 (DDCNITGDCNET), 316–327 (DDCNITGDCNET), 328–339 (DDCNITGDCNET), 340–351 (DDCNITGDCNET), 352–363 (DDCDITGDCNET), 364–375 (DDCNITGDCNET), 376–387 (DDCNITGDCNET), 388–399 (DDCNITGDCNET), 400–411 (DDCNITGDCNET), 412–423 (DDCNITGDCNET), 424–435 (DDCDITGDCNET), 436–447 (DDCNITGDCNET), 448–459 (DDCDITGDCNET), 460–471 (DDCNITGDCNET), 472–483 (DDCNITGDCNET), 484–495 (DDCNITGDCNET), 496–507 (DDCNITGDCNET), 508–519 (DDCNITGDCNET), 520–531 (DDCNITGDCNET), 532–543 (DDCDITGDCNET), 544–555 (DDCNITGDCNET), 556–567 (DDCNITGDCNET), 568–579 (DDCNITGDCNET), 580–591 (DDCNITGDCNET), 592–603 (DDCNITGDCNET), 604–615 (DDCDITGDCNET), 616–627 (DDCNITGDCNET), 628–639 (DDCDITGDCNET), 640–651 (DDCNITGDCNET), 652–663 (DDCNITGDCNET), 664–675 (DDCNITGDCNET), 676–687 (DDCNITGDCNET), 688–699 (DDCNITGDCNET), 700–711 (DDCNITGDCNET), 712–723 (DDCDITGDCNET), 724–735 (DDCNITGDCNET), 736–747 (DDCNITGDCNET), 748–759 (DDCNITGDCNET), 760–771 (DDCNITGDCNET), 772–783 (DDCNITGDCNET), 784–795 (DDCDITGDCNET), 796–807 (DDCNITGDCNET), 808–819 (DDCDITGDCNET), and 820–831 (DDCNITGDCNET). Residues 40–831 (DDCNITGDCN…CNITGDCNET (792 aa)) are 66 X 12 AA tandem repeats of D-D-C-[ND]-I-T-G-D-G-N-E-T. N-linked (GlcNAc...) asparagine glycans are attached at residues N67, N79, N91, and N103. N-linked (GlcNAc...) asparagine glycosylation is found at N127, N139, and N151. N175 carries an N-linked (GlcNAc...) asparagine glycan. Residues N199, N211, N223, N235, N247, and N259 are each glycosylated (N-linked (GlcNAc...) asparagine). N283, N295, N307, N319, N331, and N343 each carry an N-linked (GlcNAc...) asparagine glycan. N367, N379, N391, N403, and N415 each carry an N-linked (GlcNAc...) asparagine glycan. A glycan (N-linked (GlcNAc...) asparagine) is linked at N439. N463, N475, N487, N499, N511, and N523 each carry an N-linked (GlcNAc...) asparagine glycan. N-linked (GlcNAc...) asparagine glycans are attached at residues N547, N559, N571, N583, and N595. A glycan (N-linked (GlcNAc...) asparagine) is linked at N619. N-linked (GlcNAc...) asparagine glycosylation is found at N643, N655, N667, N679, N691, and N703. N-linked (GlcNAc...) asparagine glycosylation is found at N727, N739, N751, N763, and N775. N799 is a glycosylation site (N-linked (GlcNAc...) asparagine). N823 is a glycosylation site (N-linked (GlcNAc...) asparagine). Residues 883–903 (LLLAGSTFLVLAVGLSAVLFL) traverse the membrane as a helical segment. Over 904 to 945 (GRERQNAVVICDNEVMMEEVPGCLSDASFAVPVTQSSDEARP) the chain is Cytoplasmic.

The protein localises to the flagellar pocket. The protein resides in the cell membrane. Functionally, supposed to function as cell surface receptor. Possibly involved in receptor-mediated endocytosis. The chain is Cysteine-rich, acidic integral membrane protein (CRAM) from Trypanosoma brucei brucei.